Reading from the N-terminus, the 127-residue chain is Large ribosomal subunit protein bL17 (127 aa).

The protein belongs to the bacterial ribosomal protein bL17 family. In terms of assembly, part of the 50S ribosomal subunit. Contacts protein L32.

The chain is Large ribosomal subunit protein bL17 from Mannheimia succiniciproducens (strain KCTC 0769BP / MBEL55E).